A 160-amino-acid chain; its full sequence is Invasion protein IagB (160 aa).

The N-terminal stretch at 1-19 is a signal peptide; it reads MHYFFIIVIWLLSINTAWA.

The protein belongs to the IagB/IpgF/P19 family.

The polypeptide is Invasion protein IagB (iagB) (Salmonella typhi).